The sequence spans 364 residues: Coproporphyrin III ferrochelatase (364 aa).

2 residues coordinate Fe-coproporphyrin III: Arg29 and Tyr118. The Fe(2+) site is built by His169 and Glu250.

It belongs to the ferrochelatase family.

Its subcellular location is the cytoplasm. The catalysed reaction is Fe-coproporphyrin III + 2 H(+) = coproporphyrin III + Fe(2+). The protein operates within porphyrin-containing compound metabolism; protoheme biosynthesis. Its function is as follows. Involved in coproporphyrin-dependent heme b biosynthesis. Catalyzes the insertion of ferrous iron into coproporphyrin III to form Fe-coproporphyrin III. This Streptococcus pneumoniae serotype 4 (strain ATCC BAA-334 / TIGR4) protein is Coproporphyrin III ferrochelatase.